The primary structure comprises 460 residues: ATP synthase subunit beta (460 aa).

150-157 (GGAGVGKT) lines the ATP pocket.

It belongs to the ATPase alpha/beta chains family. As to quaternary structure, F-type ATPases have 2 components, CF(1) - the catalytic core - and CF(0) - the membrane proton channel. CF(1) has five subunits: alpha(3), beta(3), gamma(1), delta(1), epsilon(1). CF(0) has three main subunits: a(1), b(2) and c(9-12). The alpha and beta chains form an alternating ring which encloses part of the gamma chain. CF(1) is attached to CF(0) by a central stalk formed by the gamma and epsilon chains, while a peripheral stalk is formed by the delta and b chains.

It is found in the cell inner membrane. It carries out the reaction ATP + H2O + 4 H(+)(in) = ADP + phosphate + 5 H(+)(out). In terms of biological role, produces ATP from ADP in the presence of a proton gradient across the membrane. The catalytic sites are hosted primarily by the beta subunits. The polypeptide is ATP synthase subunit beta (Salmonella paratyphi A (strain ATCC 9150 / SARB42)).